A 558-amino-acid chain; its full sequence is Atlastin-1 (558 aa).

Positions 1 to 27 (MAKNRRDRNSWGGFSEKTYEWSSEEEE) are disordered. Positions 1–34 (MAKNRRDRNSWGGFSEKTYEWSSEEEEPVKKAGP) are N-terminal hypervariable region (HVR). Over 1–449 (MAKNRRDRNS…NIFHAARTPA (449 aa)) the chain is Cytoplasmic. 3 positions are modified to phosphoserine: serine 10, serine 22, and serine 23. Positions 64–309 (DKEVVAVSVA…LIPWLLSPES (246 aa)) constitute a GB1/RHD3-type G domain. Positions 77, 78, 79, 80, 81, 82, 148, 217, 218, 276, and 279 each coordinate GDP. Arginine 77, lysine 78, glycine 79, lysine 80, serine 81, and phenylalanine 82 together coordinate GTP. Mg(2+) is bound at residue serine 81. GTP is bound by residues arginine 217, aspartate 218, and valine 276. The interval 347-438 (MLQATAEANN…YIQYIKHNDS (92 aa)) is 3HB (three-helix bundle) domain. Lysine 395 is subject to N6-acetyllysine. A coiled-coil region spans residues 412–439 (EFSRRYLQQLESEIDELYIQYIKHNDSK). Residues 439 to 447 (KNIFHAART) are linker. Residues 450 to 470 (TLFVVIFITYVIAGVTGFIGL) traverse the membrane as a helical segment. Residue aspartate 471 is a topological domain, lumenal. A helical transmembrane segment spans residues 472–492 (IIASLCNMIMGLTLITLCTWA). The Cytoplasmic segment spans residues 493–558 (YIRYSGEYRE…STEQSEKKKM (66 aa)). The tract at residues 521–558 (NEALYKLYSAAATHRHLYHQAFPTPKSESTEQSEKKKM) is autoinhibitory domain.

Belongs to the TRAFAC class dynamin-like GTPase superfamily. GB1/RHD3 GTPase family. GB1 subfamily. As to quaternary structure, monomeric and homodimeric. The homodimer, transiently formed by two molecules on opposing membranes, is the active form mediating ER membrane fusion. Interacts with REEP1, REEP5, RTN3 and RTN4 (via the transmembrane region); these proteins are involved in endoplasmic reticulum tubular network organization. Interacts with ZFYVE27; both proteins are involved in endoplasmic reticulum tubular network organization. Interacts with ARL6IP1; both proteins are involved in endoplasmic reticulum tubular network organization. Interacts with SPAST; the interaction is direct, could recruit SPAST to Golgi membranes. Interacts (via N-terminal region) with MAP4K4 (via CNH regulatory domain). May interact with TMED2. Interacts with CPT1C. Post-translationally, phosphorylated. Phosphorylation, by different kinases, of the N-terminal hypervariable region (HVR) regulates the ATL1-mediated membrane tethering step.

It is found in the endoplasmic reticulum membrane. Its subcellular location is the golgi apparatus membrane. The protein resides in the cell projection. The protein localises to the axon. The enzyme catalyses GTP + H2O = GDP + phosphate + H(+). Atlastin-1 (ATL1) is a membrane-anchored GTPase that mediates the GTP-dependent fusion of endoplasmic reticulum (ER) membranes, maintaining the continuous ER network. It facilitates the formation of three-way junctions where ER tubules intersect. Two atlastin-1 on neighboring ER tubules bind GTP and form loose homodimers through the GB1/RHD3-type G domains and 3HB regions. Upon GTP hydrolysis, the 3HB regions tighten, pulling the membranes together to drive their fusion. After fusion, the homodimer disassembles upon release of inorganic phosphate (Pi). Subsequently, GDP dissociates, resetting the monomers to a conformation ready for a new fusion cycle. May also regulate more or less directly Golgi biogenesis. Indirectly regulates axonal development. The protein is Atlastin-1 of Pongo abelii (Sumatran orangutan).